The following is a 480-amino-acid chain: MNPTLTLTDFISIGPLLIVLMTALIIILIESFSENCSKKWSSLISIGGLTLSIFAVWGGISSNHSSLLNPWIHFDTLARFFTVFFLVIGIGASLLATAFFQRFKASHGEYFFLLQSAVFGLILIGAAADLLTLFLGIETLSISLYVLCGYMKKWEISHESSFKYFLMGSIVAGFLLYGIALVYGAIGTTRLDVLLSSYQTISLTTEKVLFFSGIAMITLGLAFKAALVPFHTWSPDVYAGASNPVTAFMAVGTKVGVFAAFVRLFFEALPQFDAAWNQVIDTLVYATLIYANFVALKQIQLRRFFAYSSISHAGFLMIPVVIGNQEALSALTFYLVIYAIATFGCFAVLAYLDQNQEGVHFSDLHGLFSRSPWLASLLSICLLTLAGIPPTAGFLAKFYVFKVAFQAGYYGLVIVGLLTTILSSYYYLRIIGILFSESKNDEKLPYSMPAAIVGTTSFIAIIILSFYPAPFLKVLSHLSN.

A run of 13 helical transmembrane segments spans residues 10-30, 40-60, 80-100, 117-137, 166-186, 208-228, 246-266, 276-296, 304-324, 330-350, 374-394, 409-431, and 452-472; these read FISI…ILIE, WSSL…WGGI, FFTV…TAFF, AVFG…FLGI, LMGS…YGAI, VLFF…AALV, TAFM…RLFF, WNQV…FVAL, FFAY…VIGN, ALTF…AVLA, LASL…TAGF, YYGL…LRII, and IVGT…APFL.

Belongs to the complex I subunit 2 family. As to quaternary structure, NDH-1 is composed of 14 different subunits. Subunits NuoA, H, J, K, L, M, N constitute the membrane sector of the complex.

The protein resides in the cell inner membrane. It catalyses the reaction a quinone + NADH + 5 H(+)(in) = a quinol + NAD(+) + 4 H(+)(out). In terms of biological role, NDH-1 shuttles electrons from NADH, via FMN and iron-sulfur (Fe-S) centers, to quinones in the respiratory chain. The immediate electron acceptor for the enzyme in this species is believed to be ubiquinone. Couples the redox reaction to proton translocation (for every two electrons transferred, four hydrogen ions are translocated across the cytoplasmic membrane), and thus conserves the redox energy in a proton gradient. This Protochlamydia amoebophila (strain UWE25) protein is NADH-quinone oxidoreductase subunit N.